Consider the following 720-residue polypeptide: Fatty acid oxidation complex subunit alpha (720 aa).

The segment at 1–189 (MIYQGETLSV…KLGLVDAVVA (189 aa)) is enoyl-CoA hydratase/isomerase. Position 296 (Asp296) interacts with substrate. Residues 311–720 (QPTKKGVVLG…ESYYTQQVNA (410 aa)) form a 3-hydroxyacyl-CoA dehydrogenase region. NAD(+) is bound by residues Met324, Asp343, 400–402 (VVE), Lys407, and Ser429. The active-site For 3-hydroxyacyl-CoA dehydrogenase activity is His450. Asn453 lines the NAD(+) pocket. Residues Asn500 and Tyr660 each contribute to the substrate site.

It in the N-terminal section; belongs to the enoyl-CoA hydratase/isomerase family. This sequence in the C-terminal section; belongs to the 3-hydroxyacyl-CoA dehydrogenase family. In terms of assembly, heterotetramer of two alpha chains (FadB) and two beta chains (FadA).

It catalyses the reaction a (3S)-3-hydroxyacyl-CoA + NAD(+) = a 3-oxoacyl-CoA + NADH + H(+). It carries out the reaction a (3S)-3-hydroxyacyl-CoA = a (2E)-enoyl-CoA + H2O. The catalysed reaction is a 4-saturated-(3S)-3-hydroxyacyl-CoA = a (3E)-enoyl-CoA + H2O. The enzyme catalyses (3S)-3-hydroxybutanoyl-CoA = (3R)-3-hydroxybutanoyl-CoA. It catalyses the reaction a (3Z)-enoyl-CoA = a 4-saturated (2E)-enoyl-CoA. It carries out the reaction a (3E)-enoyl-CoA = a 4-saturated (2E)-enoyl-CoA. Its pathway is lipid metabolism; fatty acid beta-oxidation. In terms of biological role, involved in the aerobic and anaerobic degradation of long-chain fatty acids via beta-oxidation cycle. Catalyzes the formation of 3-oxoacyl-CoA from enoyl-CoA via L-3-hydroxyacyl-CoA. It can also use D-3-hydroxyacyl-CoA and cis-3-enoyl-CoA as substrate. This chain is Fatty acid oxidation complex subunit alpha, found in Photobacterium profundum (strain SS9).